The following is a 968-amino-acid chain: C-1-tetrahydrofolate synthase, cytoplasmic (968 aa).

The methylenetetrahydrofolate dehydrogenase and cyclohydrolase stretch occupies residues 1–338 (MSAQYQRFLK…ERLAKSQWAL (338 aa)). Residues 86–90 (YIRMK) and 133–135 (VQM) each bind substrate. NADP(+) contacts are provided by residues 205 to 207 (GRS) and S230. Residue 305–309 (PGGVG) participates in substrate binding. Residues 339–968 (QTLPLKPQRP…TETGEIEGLF (630 aa)) form a formyltetrahydrofolate synthetase region. 413-420 (TPLGEGKT) serves as a coordination point for ATP.

It in the N-terminal section; belongs to the tetrahydrofolate dehydrogenase/cyclohydrolase family. This sequence in the C-terminal section; belongs to the formate--tetrahydrofolate ligase family. In terms of assembly, homodimer. As to expression, present in all tissues.

It localises to the cytoplasm. The catalysed reaction is (6R)-5,10-methylene-5,6,7,8-tetrahydrofolate + NADP(+) = (6R)-5,10-methenyltetrahydrofolate + NADPH. It carries out the reaction (6R)-5,10-methenyltetrahydrofolate + H2O = (6R)-10-formyltetrahydrofolate + H(+). The enzyme catalyses (6S)-5,6,7,8-tetrahydrofolate + formate + ATP = (6R)-10-formyltetrahydrofolate + ADP + phosphate. It functions in the pathway one-carbon metabolism; tetrahydrofolate interconversion. The protein is C-1-tetrahydrofolate synthase, cytoplasmic (pug) of Drosophila melanogaster (Fruit fly).